A 106-amino-acid polypeptide reads, in one-letter code: Protein RnfH (106 aa).

It belongs to the UPF0125 (RnfH) family.

In Ectopseudomonas mendocina (strain ymp) (Pseudomonas mendocina), this protein is Protein RnfH.